The following is a 498-amino-acid chain: ATP synthase subunit beta, chloroplastic (498 aa).

172-179 is an ATP binding site; it reads GGAGVGKT.

It belongs to the ATPase alpha/beta chains family. F-type ATPases have 2 components, CF(1) - the catalytic core - and CF(0) - the membrane proton channel. CF(1) has five subunits: alpha(3), beta(3), gamma(1), delta(1), epsilon(1). CF(0) has four main subunits: a(1), b(1), b'(1) and c(9-12).

It is found in the plastid. The protein resides in the chloroplast thylakoid membrane. The catalysed reaction is ATP + H2O + 4 H(+)(in) = ADP + phosphate + 5 H(+)(out). In terms of biological role, produces ATP from ADP in the presence of a proton gradient across the membrane. The catalytic sites are hosted primarily by the beta subunits. This chain is ATP synthase subunit beta, chloroplastic, found in Lemna minor (Common duckweed).